The sequence spans 354 residues: MLIFPLINDTSRKIIHIDMDAFFAAVEVRDNPKLKGHPVIIGSDPRLTGGRGVVSTCNYEARKFGVHSAMSSKEAYERCPQGIFISGNYEKYQAVGLQIREIFKRYTDLIEPMSIDEAYLDVTENKLGIKSAVKIAKLIQHDIWNELQLTASAGVSYNKFLAKIASDYEKPHGLTVILPEEAEAFLAPMDIAKFHGVGNKSVEKLHEMGVYTGADLLKIPEMTLIDKFGRFGFDLYRKARGISNSPVKSNRIRKSIGKERTYAKLLYSEEDIKKELTLLAQKVENSLIKHDKKGRTIVLKIRYADFSTLTKRKSLNLATRDKKQIERTAHEIYDSLEEQPRGIRLLGLTVTGFE.

Residues 14–198 form the UmuC domain; that stretch reads IIHIDMDAFF…MDIAKFHGVG (185 aa). Mg(2+)-binding residues include Asp18 and Asp116. Glu117 is an active-site residue.

The protein belongs to the DNA polymerase type-Y family. In terms of assembly, monomer. Requires Mg(2+) as cofactor.

It is found in the cytoplasm. It catalyses the reaction DNA(n) + a 2'-deoxyribonucleoside 5'-triphosphate = DNA(n+1) + diphosphate. Its function is as follows. Poorly processive, error-prone DNA polymerase involved in untargeted mutagenesis. Copies undamaged DNA at stalled replication forks, which arise in vivo from mismatched or misaligned primer ends. These misaligned primers can be extended by PolIV. Exhibits no 3'-5' exonuclease (proofreading) activity. May be involved in translesional synthesis, in conjunction with the beta clamp from PolIII. The polypeptide is DNA polymerase IV (Streptococcus gordonii (strain Challis / ATCC 35105 / BCRC 15272 / CH1 / DL1 / V288)).